The following is a 325-amino-acid chain: Beta-ketoacyl-[acyl-carrier-protein] synthase III (325 aa).

Residues cysteine 119 and histidine 252 contribute to the active site. The interval 253-257 (QANIR) is ACP-binding. Asparagine 282 is a catalytic residue.

This sequence belongs to the thiolase-like superfamily. FabH family. As to quaternary structure, homodimer.

It is found in the cytoplasm. It catalyses the reaction malonyl-[ACP] + acetyl-CoA + H(+) = 3-oxobutanoyl-[ACP] + CO2 + CoA. The protein operates within lipid metabolism; fatty acid biosynthesis. In terms of biological role, catalyzes the condensation reaction of fatty acid synthesis by the addition to an acyl acceptor of two carbons from malonyl-ACP. Catalyzes the first condensation reaction which initiates fatty acid synthesis and may therefore play a role in governing the total rate of fatty acid production. Possesses both acetoacetyl-ACP synthase and acetyl transacylase activities. Its substrate specificity determines the biosynthesis of branched-chain and/or straight-chain of fatty acids. The protein is Beta-ketoacyl-[acyl-carrier-protein] synthase III of Polaromonas sp. (strain JS666 / ATCC BAA-500).